Reading from the N-terminus, the 356-residue chain is S-adenosylmethionine:tRNA ribosyltransferase-isomerase (356 aa).

Belongs to the QueA family. In terms of assembly, monomer.

It localises to the cytoplasm. The catalysed reaction is 7-aminomethyl-7-carbaguanosine(34) in tRNA + S-adenosyl-L-methionine = epoxyqueuosine(34) in tRNA + adenine + L-methionine + 2 H(+). It functions in the pathway tRNA modification; tRNA-queuosine biosynthesis. Its function is as follows. Transfers and isomerizes the ribose moiety from AdoMet to the 7-aminomethyl group of 7-deazaguanine (preQ1-tRNA) to give epoxyqueuosine (oQ-tRNA). This Yersinia pestis protein is S-adenosylmethionine:tRNA ribosyltransferase-isomerase.